The chain runs to 273 residues: MAFEDIPFLQYLGNAVDILLVWYVIYKLIMVIRGTKAVQLLKGIVVIVLVRMASQYLGLSTLQWLMDQAITWGFLAIIIIFQPELRRALEQLGRGRFFSRSGTPVEEAQQKTIEAITKAINYMAKRRIGALLTIERDTGMGDYIETGIPLNAKVSSELLINIFIPNTPLHDGAVIMKNNEIAAAACYLPLSESPFISKELGTRHRAAVGISEVTDSLTIIVSEETGGVSVAKNGDLHRELTEEALKEMLEAEFKKNTRDTSSNRWYWRGKKNG.

Helical transmembrane passes span 12-32, 40-60, and 61-81; these read LGNA…IMVI, LLKG…LGLS, and TLQW…IIIF. The DAC domain maps to 82-242; the sequence is QPELRRALEQ…NGDLHRELTE (161 aa).

This sequence belongs to the adenylate cyclase family. DacA/CdaA subfamily. Probably a homodimer. Interacts with CdaR. May interact with GlmM.

It is found in the cell membrane. The catalysed reaction is 2 ATP = 3',3'-c-di-AMP + 2 diphosphate. With respect to regulation, DAC activity is stimulated about 20-fold in E.coli by coexpression with CdaR. Functionally, one of 3 paralogous diadenylate cyclases (DAC) in this bacteria, catalyzing the condensation of 2 ATP molecules into cyclic di-AMP (c-di-AMP). Upon expression in E.coli leads to c-di-AMP synthesis. Probably the main producer of c-di-AMP for the cell; is probably implicated in control of peptidoglycan synthesis. In B.subtilis c-di-AMP is a second messenger that mediates growth, DNA repair and cell wall homeostasis; it is toxic when present in excess. In Bacillus subtilis (strain 168), this protein is Cyclic di-AMP synthase CdaA.